We begin with the raw amino-acid sequence, 617 residues long: Putative metal ion transporter C17A12.14 (617 aa).

The segment at 1–141 (MPSNTSRSVP…GKNTRDQPSP (141 aa)) is disordered. A Phosphoserine modification is found at Ser-105. Basic and acidic residues predominate over residues 117–136 (SHPEDIQRKEFETENGKNTR). Ser-152, Ser-162, Ser-226, and Ser-241 each carry phosphoserine. The next 2 membrane-spanning stretches (helical) occupy residues 560–580 (TILG…GMNV) and 590–610 (LGWF…SFIL).

Belongs to the CorA metal ion transporter (MIT) (TC 1.A.35) family. In terms of assembly, interacts with sad1.

The protein resides in the membrane. In Schizosaccharomyces pombe (strain 972 / ATCC 24843) (Fission yeast), this protein is Putative metal ion transporter C17A12.14.